The chain runs to 258 residues: Undecaprenyl-diphosphatase (258 aa).

8 helical membrane passes run 14-34, 39-59, 79-99, 106-126, 136-156, 176-196, 209-229, and 237-257; these read AAGE…PWLL, QGLT…LIYF, GKIL…GVLF, VFRS…ILHL, VALN…ALMP, AESA…AAVL, AFIA…KFLM, and FNIF…TALM.

Belongs to the UppP family.

The protein localises to the cell membrane. The catalysed reaction is di-trans,octa-cis-undecaprenyl diphosphate + H2O = di-trans,octa-cis-undecaprenyl phosphate + phosphate + H(+). Catalyzes the dephosphorylation of undecaprenyl diphosphate (UPP). Confers resistance to bacitracin. This chain is Undecaprenyl-diphosphatase, found in Elusimicrobium minutum (strain Pei191).